A 351-amino-acid chain; its full sequence is Selenide, water dikinase (351 aa).

Residue U15 is part of the active site. A non-standard amino acid (selenocysteine) is located at residue U15. Residues K18 and 47 to 49 (DNE) contribute to the ATP site. D50 lines the Mg(2+) pocket. Residues D67, D90, and 138 to 140 (GHS) each bind ATP. Mg(2+) is bound at residue D90. A Mg(2+)-binding site is contributed by D227.

It belongs to the selenophosphate synthase 1 family. Class I subfamily. Homodimer. Requires Mg(2+) as cofactor.

It carries out the reaction hydrogenselenide + ATP + H2O = selenophosphate + AMP + phosphate + 2 H(+). Synthesizes selenophosphate from selenide and ATP. This is Selenide, water dikinase from Nitratidesulfovibrio vulgaris (strain ATCC 29579 / DSM 644 / CCUG 34227 / NCIMB 8303 / VKM B-1760 / Hildenborough) (Desulfovibrio vulgaris).